The primary structure comprises 1510 residues: MSDVFELENEIELESDEVIMENENVEEIVDAPIPFSMTTNNGVERGKFRSLTLINWNGFFARTFDLDELVTTLSGGNGAGKSTTMAGFVTALIPDLTLLHFRNTTEAGSTGGSRDKGLHGKLRPGVCYAVLDTINSRHQRILVGVRLQQIAGRDKKVDLKTFSIQGVELSQNPTALFTETVGERQARVLNLNELKDKIENIGAQFKQYHSITDYHGMMFDLGIIPKRLRSASDRSKFYKLIEASLYGGISSAITRSLRDYLLPENLGVRKAFQDMESALRENRMTLEAIKVTQSDRDLFKHLITETTNYVASDYMRNANERRGNIEAALESRREWYKAKAEQNLSQHRLVDLSREAAELAENERTLEVDHQSAVDHLNLVLNALRHQEKITRYQEDIAELTERLEEQKMVVEDANDALEESQAQFEQTEIEIDAVRAQLADYQKALDAQQTRALQYQQAIAALEKAKTLCGLADLSVKNVEDYHAEFEAHAESLTETVLELEHKMSISEAAKSQFDKAYQLVCKIAGEMPRSAAWESAKELLREYPSQKLQAQQTPQLRTKLHELEQRYAQQQSAVKLLNDFNQRTNLSLQTAEELEDYHAEQEALIEDISAGLSEQVENRSTLRQKRENLTALYDENARKAPAWLTAQAALERLEQQSGETFEHSQDVMNFMQSQLVKERELTMQRDQLEQKRLQLDEQISRLSQPDGSEDPRLNMLAERFGGVLLSELYDDVTIEDAPYFSALYGPSRHAIVVRDLNAVREQLAQLEDCPDDLYLIEGDPTAFDDSVLSAQELELGVVVQVSDRELRYSRFPEIPLFGSAAREKRLEELQIERDEVAEQHAQIAFDVQKYQRLHEHFSQFVGLHLALAFQPNPEALMSEINRERNEIDRELNQFNNGEQQLRIQLDNAKEKLQLLNKLIPQLNVLADEDLIDRIEECREQLDIAEQDEYFIRQYGVTLSQLEPIANSLQSDPENYEGLKNELTQAIERQKQVQQRVFALADVVQRKPHFGYEDAGQAETSELNEKLRQRLEQMQAQRDTQREQVRQKQSQFAEYNRVLIQLQSSYDSKYQLLNELIGEISDLGVRADDGAEERARIRRDELHQQLSTSRQRRSYVEKQLTLIESEADNLNRLIRKTERDYKTQRELVVAAKVSWCVVLRLSRNSDMEKRLNRRELAYLSADELRSMSDKALGALRTAVADNEYLRDSLRVSEDSRKPENKVRFFIAVYQHLRERIRQDIIKTDDPIDAIEQMEIELSRLTAELTGREKKLAISSESVANIMRKTIQREQNRIRMLNQGLQNIAFGQVKSVRLVVNIRDTHAMLLDALSGQQNEYQDLFNDNRITFSEAMAKLYQRINPHIDMGQRTAQTIGEELLDYRNYLELEVEVFRGADGWLRAESGALSTGEAIGTGMSILLMVVQSWEEESRRIRGKDIVPCRLLFLDEAARLDGKSISTLFELCERLDMQLLIAAPENISPEKGTTYKLVRKIAGNQEHVHVVGLRGFGATE.

The stretch at 6 to 30 (ELENEIELESDEVIMENENVEEIVD) forms a coiled coil. ATP is bound at residue 75 to 82 (GGNGAGKS). Coiled coils occupy residues 346 to 506 (QHRL…HKMS), 553 to 611 (QQTP…EDIS), 673 to 706 (MQSQ…RLSQ), 821 to 846 (SAAR…AQIA), 876 to 1064 (EALM…IQLQ), 1094 to 1149 (ERAR…RELV), and 1249 to 1304 (DAIE…LQNI). A flexible hinge region spans residues 707–824 (PDGSEDPRLN…EIPLFGSAAR (118 aa)).

It belongs to the SMC family. MukB subfamily. In terms of assembly, homodimerization via its hinge domain. Binds to DNA via its C-terminal region. Interacts, and probably forms a ternary complex, with MukE and MukF via its C-terminal region. The complex formation is stimulated by calcium or magnesium. Interacts with tubulin-related protein FtsZ.

It localises to the cytoplasm. Its subcellular location is the nucleoid. Functionally, plays a central role in chromosome condensation, segregation and cell cycle progression. Functions as a homodimer, which is essential for chromosome partition. Involved in negative DNA supercoiling in vivo, and by this means organize and compact chromosomes. May achieve or facilitate chromosome segregation by condensation DNA from both sides of a centrally located replisome during cell division. This Haemophilus influenzae (strain PittGG) protein is Chromosome partition protein MukB.